We begin with the raw amino-acid sequence, 346 residues long: Biotin synthase (346 aa).

Residues K38–T256 form the Radical SAM core domain. Residues C53, C57, and C60 each coordinate [4Fe-4S] cluster. Residues C97, C128, C188, and R260 each contribute to the [2Fe-2S] cluster site.

It belongs to the radical SAM superfamily. Biotin synthase family. In terms of assembly, homodimer. [4Fe-4S] cluster serves as cofactor. [2Fe-2S] cluster is required as a cofactor.

It carries out the reaction (4R,5S)-dethiobiotin + (sulfur carrier)-SH + 2 reduced [2Fe-2S]-[ferredoxin] + 2 S-adenosyl-L-methionine = (sulfur carrier)-H + biotin + 2 5'-deoxyadenosine + 2 L-methionine + 2 oxidized [2Fe-2S]-[ferredoxin]. It functions in the pathway cofactor biosynthesis; biotin biosynthesis; biotin from 7,8-diaminononanoate: step 2/2. Its function is as follows. Catalyzes the conversion of dethiobiotin (DTB) to biotin by the insertion of a sulfur atom into dethiobiotin via a radical-based mechanism. This is Biotin synthase from Salmonella arizonae (strain ATCC BAA-731 / CDC346-86 / RSK2980).